Consider the following 609-residue polypeptide: Phosphoenolpyruvate carboxykinase [GTP] (609 aa).

Substrate is bound by residues Arg81 and 220 to 222 (YGG). The Mn(2+) site is built by Lys229 and His249. Ser271 provides a ligand contact to substrate. A GTP-binding site is contributed by 272–277 (ACGKTN). Cys273 is an active-site residue. Asp296 contributes to the Mn(2+) binding site. Residue 387–389 (NSR) coordinates substrate. GTP is bound by residues Arg389, Arg420, and 515–518 (FGEN).

Belongs to the phosphoenolpyruvate carboxykinase [GTP] family. In terms of assembly, monomer. It depends on Mn(2+) as a cofactor.

It is found in the cytoplasm. The catalysed reaction is oxaloacetate + GTP = phosphoenolpyruvate + GDP + CO2. It participates in carbohydrate biosynthesis; gluconeogenesis. In terms of biological role, catalyzes the conversion of oxaloacetate (OAA) to phosphoenolpyruvate (PEP), the rate-limiting step in the metabolic pathway that produces glucose from lactate and other precursors derived from the citric acid cycle. This is Phosphoenolpyruvate carboxykinase [GTP] from Mycobacterium ulcerans (strain Agy99).